The primary structure comprises 340 residues: Phosphoribosylformylglycinamidine cyclo-ligase (340 aa).

This sequence belongs to the AIR synthase family.

The protein resides in the cytoplasm. It catalyses the reaction 2-formamido-N(1)-(5-O-phospho-beta-D-ribosyl)acetamidine + ATP = 5-amino-1-(5-phospho-beta-D-ribosyl)imidazole + ADP + phosphate + H(+). The protein operates within purine metabolism; IMP biosynthesis via de novo pathway; 5-amino-1-(5-phospho-D-ribosyl)imidazole from N(2)-formyl-N(1)-(5-phospho-D-ribosyl)glycinamide: step 2/2. The chain is Phosphoribosylformylglycinamidine cyclo-ligase from Streptococcus pyogenes serotype M3 (strain ATCC BAA-595 / MGAS315).